Consider the following 499-residue polypeptide: Endosomal/lysosomal proton channel TMEM175 (499 aa).

The Cytoplasmic segment spans residues 1–30 (MSRLQTEEQAVDSEGDSSLHRRNEEGTQSS). Residues 1–30 (MSRLQTEEQAVDSEGDSSLHRRNEEGTQSS) form a disordered region. T6 carries the phosphothreonine modification. The helical transmembrane segment at 31-53 (HRMLGFSDALLSIIATVMILPVT) threads the bilayer. The RxxxFSD motif 1 motif lies at 32–38 (RMLGFSD). The Lumenal segment spans residues 54-74 (HTEISPEQQFDKSIQKLLATR). The segment at 55 to 60 (TEISPE) is short helix H1-1. Residues 62-68 (QFDKSIQ) form a short helix H2-1 region. Residues 75-97 (IAVYLMTFLIVTVAWTAHTRLFQ) form a helical membrane-spanning segment. The Cytoplasmic portion of the chain corresponds to 98–103 (VVGKID). A helical membrane pass occupies residues 104-125 (DTLALLNLACMMTITLLPYTFS). Over 126–135 (LMVTFPDVPL) the chain is Lumenal. Residues 136–157 (GIFLFCVCVIAIGSVQAMIVGY) traverse the membrane as a helical segment. Residues 158–181 (AFHFPHLLNPQIQCSTHRDLSRRH) lie on the Cytoplasmic side of the membrane. A helical membrane pass occupies residues 182–202 (ILHLVLRGPALCFVAAVFSLF). The Lumenal portion of the chain corresponds to 203–207 (FFPLS). Residues 208–227 (YLLMVTVIFLPHISKATTWC) form a helical membrane-spanning segment. The Cytoplasmic segment spans residues 228–254 (KDKLMGQRESPAHDMEPFSIDLHAPLS). A helical transmembrane segment spans residues 255–279 (KERVEAFSDGVYAIVATLLILDICE). A RxxxFSD motif 2 motif is present at residues 257–263 (RVEAFSD). The Lumenal segment spans residues 280–306 (DNVPDPKDVQEKFSGSLVAALGAYGPQ). The tract at residues 285–293 (PKDVQEKFS) is short helix H1-2. The tract at residues 295 to 301 (SLVAALG) is short helix H2-2. The helical transmembrane segment at 307-329 (FLAYFGSFATVGLLWFAHHSLFL) threads the bilayer. Residues 330-335 (HVRKAT) are Cytoplasmic-facing. The chain crosses the membrane as a helical span at residues 336–357 (QTMGLLNILSLAFVGGLPLAYQ). At 358–372 (QTSAFARQPHDELER) the chain is on the lumenal side. The helical transmembrane segment at 373-393 (VRVSCAIIFFASIFQFAIWTT) threads the bilayer. Residues 394-413 (ALLHQTETLQPAVQFGGQEH) are Cytoplasmic-facing. The helical transmembrane segment at 414–437 (AFMFAKLALYPCASLLAFAATCLL) threads the bilayer. Residues 438–439 (SR) lie on the Lumenal side of the membrane. Residues 440-466 (FSTAIFHLMQISVPFAFLLLRLLVRLA) traverse the membrane as a helical segment. Over 467–499 (LAGLQVLRGLWPHHPQQDQSEPEAQSQLLPDPC) the chain is Cytoplasmic.

This sequence belongs to the TMEM175 family. Homodimer. Interacts with AKT (AKT1, AKT2 or AKT3); leading to formation of the lysoK(GF) complex, which activates the channel. Interacts with LAMP1; inhibiting the proton channel activity of TMEM175. Interacts with LAMP2; inhibiting the proton channel activity of TMEM175.

The protein resides in the endosome membrane. The protein localises to the lysosome membrane. It catalyses the reaction H(+)(in) = H(+)(out). The enzyme catalyses K(+)(in) = K(+)(out). Active at low pH (under pH 4.6): proton channel activity is activated by luminal side protons. Polyunsaturated fatty acids, such as arachidonic acid, also activate the channel activity. Proton channel activity is directly inhibited by LAMP1 or LAMP2, facilitating lysosomal acidification. Channel activity is activated following interaction with AKT (AKT1, AKT2 or AKT3): interaction promotes activation from closed to an open state. Activation by AKT is independent of AKT serine/threonine-protein kinase activity. In terms of biological role, proton-activated proton channel that catalyzes proton efflux from endosomes and lysosomes to maintain a steady-state pH. Activated at low pH (under pH 4.6) by luminal side protons: selectively mediates lysosomal proton release from lysosomes, eliciting a proton leak that balances V-ATPase activity to maintain pH homeostasis. Regulation of lumenal pH stability is required for autophagosome-lysosome fusion. Also acts as a potassium channel at higher pH, regulating potassium conductance in endosomes and lysosomes. Constitutes the pore-forming subunit of the lysoK(GF) complex, a complex activated by extracellular growth factors. The lysoK(GF) complex is composed of TMEM175 and AKT (AKT1, AKT2 or AKT3), a major target of growth factor receptors: in the complex, TMEM175 channel is opened by conformational changes by AKT, leading to its activation. The lysoK(GF) complex is required to protect neurons against stress-induced damage. In Mus musculus (Mouse), this protein is Endosomal/lysosomal proton channel TMEM175.